We begin with the raw amino-acid sequence, 398 residues long: Phytoene synthase 2, chloroplastic (398 aa).

Residues 1–80 (MASSSSAAAL…EEAVYEVVLR (80 aa)) constitute a chloroplast transit peptide.

The protein belongs to the phytoene/squalene synthase family. In terms of tissue distribution, expressed in leaves and endosperm. Expressed in developing leaves.

The protein resides in the plastid. It is found in the chloroplast membrane. The protein localises to the chloroplast. It localises to the plastoglobule. It carries out the reaction 2 (2E,6E,10E)-geranylgeranyl diphosphate = 15-cis-phytoene + 2 diphosphate. Catalyzes the conversion of geranylgeranyl diphosphate to phytoene. Mediates the first committed step in carotenoid biosynthesis. The chain is Phytoene synthase 2, chloroplastic from Oryza sativa subsp. japonica (Rice).